The following is a 415-amino-acid chain: Protein PIN-LIKES 4 (415 aa).

At Met-1 to Pro-13 the chain is on the lumenal side. The chain crosses the membrane as a helical span at residues Val-14–Leu-34. Residues Leu-35–Asn-44 lie on the Cytoplasmic side of the membrane. Residues Asn-45–Ala-61 form a helical membrane-spanning segment. Residues Asp-62 to Met-75 are Lumenal-facing. The helical transmembrane segment at Pro-76–Ile-96 threads the bilayer. Topologically, residues Thr-97–Leu-106 are cytoplasmic. The helical transmembrane segment at Ile-107–Ile-127 threads the bilayer. Over Cys-128–Lys-143 the chain is Lumenal. A helical transmembrane segment spans residues Tyr-144–Tyr-161. The Cytoplasmic portion of the chain corresponds to Lys-162–Asn-244. Residues Leu-245–Ile-265 traverse the membrane as a helical segment. At Thr-266–Ser-285 the chain is on the lumenal side. Residues Leu-286 to Leu-306 traverse the membrane as a helical segment. Residues Lys-307 to Ser-322 are Cytoplasmic-facing. The helical transmembrane segment at Cys-323–Val-343 threads the bilayer. The Lumenal portion of the chain corresponds to Arg-344–Glu-355. Residues Pro-356–Thr-376 form a helical membrane-spanning segment. Residues Lys-377 to Ser-389 are Cytoplasmic-facing. The helical transmembrane segment at Val-390–Phe-410 threads the bilayer. At Met-411–Thr-415 the chain is on the lumenal side.

The protein belongs to the auxin efflux carrier (TC 2.A.69.2) family. In terms of tissue distribution, expressed in seedlings, rosette and cauline leaves, stems, flowers and siliques.

The protein localises to the endoplasmic reticulum membrane. In terms of biological role, involved in cellular auxin homeostasis by regulating auxin metabolism. Regulates intracellular auxin accumulation at the endoplasmic reticulum and thus auxin availability for nuclear auxin signaling. This is Protein PIN-LIKES 4 from Arabidopsis thaliana (Mouse-ear cress).